Reading from the N-terminus, the 87-residue chain is QADKYPAGLNPALCPNYPNCDNALIALYSNVAPAIPYAAAYNYPAGVSPAACPNYPFCGAIAPLGYHVREYPAGVHPAACPNYPYCV.

The residue at position 1 (Q1) is a Pyrrolidone carboxylic acid. 3 tandem repeats follow at residues 5–20 (YPAG…YPNC), 43–58 (YPAG…YPFC), and 71–86 (YPAG…YPYC). 3 disulfides stabilise this stretch: C14/C20, C52/C58, and C80/C86.

The sequence is that of Cuticle protein 1 from Blaberus craniifer (Death's head cockroach).